The primary structure comprises 249 residues: Formylaminopyrimidine import ATP-binding protein ThiZ (249 aa).

The ABC transporter domain occupies 6 to 228 (LTFEEVSFAY…RRKMETTEKM (223 aa)). Position 39 to 46 (39 to 46 (AKSGSGKS)) interacts with ATP.

Belongs to the ABC transporter superfamily. In terms of assembly, the complex is likely composed of an ATP-binding protein (ThiZ), a transmembrane protein (ThiX) and a solute-binding protein (ThiY).

The protein localises to the cell membrane. The protein operates within cofactor biosynthesis; thiamine diphosphate biosynthesis. Its function is as follows. Participates in a thiamine pyrimidine salvage pathway as part of the ABC transporter complex ThiXYZ involved in the import of thiamine degradation products such as the formylaminopyrimidine N-formyl-4-amino-5-aminomethyl-2-methylpyrimidine (FAMP). Is likely responsible for energy coupling to the transport system. In Halalkalibacterium halodurans (strain ATCC BAA-125 / DSM 18197 / FERM 7344 / JCM 9153 / C-125) (Bacillus halodurans), this protein is Formylaminopyrimidine import ATP-binding protein ThiZ.